A 338-amino-acid polypeptide reads, in one-letter code: Peptidyl-prolyl cis-trans isomerase cyp11 (338 aa).

In terms of domain architecture, PPIase cyclophilin-type spans 7 to 172; that stretch reads FFDIDVDGNR…HNVMIANCGE (166 aa). The tract at residues 186–338 is disordered; it reads ASAVSDESED…RGRFKYRPTY (153 aa). Residues 208-218 show a composition bias toward acidic residues; sequence DDSSSDEDSEE. Basic residues predominate over residues 223–242; it reads RTKKKRSRKHSKKDKKKKKR. A compositionally biased stretch (basic and acidic residues) spans 243–309; it reads ESSNRKRSPE…PEKRSSERRV (67 aa). A compositionally biased stretch (basic residues) spans 329–338; it reads RGRFKYRPTY.

The protein belongs to the cyclophilin-type PPIase family.

It catalyses the reaction [protein]-peptidylproline (omega=180) = [protein]-peptidylproline (omega=0). In terms of biological role, PPIases accelerate the folding of proteins. It catalyzes the cis-trans isomerization of proline imidic peptide bonds in oligopeptides. The polypeptide is Peptidyl-prolyl cis-trans isomerase cyp11 (cyp11) (Rhizopus delemar (strain RA 99-880 / ATCC MYA-4621 / FGSC 9543 / NRRL 43880) (Mucormycosis agent)).